Consider the following 168-residue polypeptide: Cell division inhibitor SulA (168 aa).

The segment at M1 to Q20 is disordered. A ftsZ binding region spans residues A105–Y111. Positions K161–H168 are lon protease binding.

This sequence belongs to the SulA family. As to quaternary structure, interacts with FtsZ. Is rapidly cleaved and degraded by the Lon protease once DNA damage is repaired.

Functionally, component of the SOS system and an inhibitor of cell division. Accumulation of SulA causes rapid cessation of cell division and the appearance of long, non-septate filaments. In the presence of GTP, binds a polymerization-competent form of FtsZ in a 1:1 ratio, thus inhibiting FtsZ polymerization and therefore preventing it from participating in the assembly of the Z ring. This mechanism prevents the premature segregation of damaged DNA to daughter cells during cell division. The sequence is that of Cell division inhibitor SulA from Pectobacterium atrosepticum (strain SCRI 1043 / ATCC BAA-672) (Erwinia carotovora subsp. atroseptica).